Here is a 213-residue protein sequence, read N- to C-terminus: uncharacterized protein (213 aa).

Residues 2 to 91 (SRHPEVKWAQ…AEAKWWKKLV (90 aa)) enclose the CS domain. The interval 168 to 213 (GMGGMGGMDEFEDESDDEEEVSKPQDAEKAAEAGKSQESDAKAETS) is disordered. Acidic residues predominate over residues 176-187 (DEFEDESDDEEE). A compositionally biased stretch (basic and acidic residues) spans 188–213 (VSKPQDAEKAAEAGKSQESDAKAETS).

This sequence belongs to the p23/wos2 family.

This is an uncharacterized protein from Oryza sativa subsp. japonica (Rice).